The sequence spans 169 residues: Putative ribonuclease VapC50 (169 aa).

Its function is as follows. Toxic component of a type II toxin-antitoxin (TA) system. An RNase. The cognate antitoxin is VapB50. This chain is Putative ribonuclease VapC50, found in Mycobacterium tuberculosis (strain ATCC 25618 / H37Rv).